A 373-amino-acid polypeptide reads, in one-letter code: Outer membrane protein assembly factor BamC (373 aa).

An N-terminal signal peptide occupies residues 1-16 (MLKQVTPLVLIAAVTA). Cysteine 17 carries the N-palmitoyl cysteine lipid modification. Cysteine 17 is lipidated: S-diacylglycerol cysteine.

This sequence belongs to the BamC family. As to quaternary structure, part of the Bam complex.

It is found in the cell outer membrane. Its function is as follows. Part of the outer membrane protein assembly complex, which is involved in assembly and insertion of beta-barrel proteins into the outer membrane. This is Outer membrane protein assembly factor BamC from Shewanella sediminis (strain HAW-EB3).